The chain runs to 705 residues: Polyribonucleotide nucleotidyltransferase (705 aa).

Mg(2+)-binding residues include D486 and D492. One can recognise a KH domain in the interval 553–612 (PRIYTMKINPEKIKDVIGKGGSVIRALTDETGTTIEIEDDGTIKIAATDGDKAKHAIRRI). An S1 motif domain is found at 622-690 (GRIYAGKVTR…RQGRIRLSIK (69 aa)).

It belongs to the polyribonucleotide nucleotidyltransferase family. Component of the RNA degradosome, which is a multiprotein complex involved in RNA processing and mRNA degradation. Mg(2+) is required as a cofactor.

It is found in the cytoplasm. The catalysed reaction is RNA(n+1) + phosphate = RNA(n) + a ribonucleoside 5'-diphosphate. In terms of biological role, involved in mRNA degradation. Catalyzes the phosphorolysis of single-stranded polyribonucleotides processively in the 3'- to 5'-direction. This Yersinia pestis bv. Antiqua (strain Nepal516) protein is Polyribonucleotide nucleotidyltransferase.